Here is a 323-residue protein sequence, read N- to C-terminus: MKKIIFAFIILFVFLLPMIIFYQPWVNALPSTPRHASPEQLEKTVRYLTQTVHPRSADNIDNLNRSAEYIKEVFVSSGARVTSQDVPITGGPYKNIVADYGPADGPLIIIGAHYDSASSYENDQLTYTPGADDNASGVAGLLELARLLHQQVPKTGVQLVAYASEEPPFFRSDEMGSAVHAASLERPVKLMIALEMIGYYDSAPGSQNYPYPAMSWLYPDRGDFIAVVGRIQDINAVRQVKAALLSSQDLSVYSMNTPGFIPGIDFSDHLNYWQHDIPAIMITDTAFYRNKQYHLPGDTADRLNYQKMAQVVDGVITLLYNSK.

The chain crosses the membrane as a helical span at residues 4 to 24 (IIFAFIILFVFLLPMIIFYQP).

Its subcellular location is the membrane. This is an uncharacterized protein from Escherichia coli (strain K12).